A 222-amino-acid chain; its full sequence is dTTP/UTP pyrophosphatase (222 aa).

Asp-83 serves as the catalytic Proton acceptor.

Belongs to the Maf family. YhdE subfamily. The cofactor is a divalent metal cation.

It localises to the cytoplasm. The enzyme catalyses dTTP + H2O = dTMP + diphosphate + H(+). The catalysed reaction is UTP + H2O = UMP + diphosphate + H(+). Nucleoside triphosphate pyrophosphatase that hydrolyzes dTTP and UTP. May have a dual role in cell division arrest and in preventing the incorporation of modified nucleotides into cellular nucleic acids. The sequence is that of dTTP/UTP pyrophosphatase from Desulfitobacterium hafniense (strain Y51).